The primary structure comprises 91 residues: uncharacterized protein (91 aa).

This is an uncharacterized protein from Archaeoglobus fulgidus (strain ATCC 49558 / DSM 4304 / JCM 9628 / NBRC 100126 / VC-16).